A 519-amino-acid polypeptide reads, in one-letter code: Putative cytochrome P450 CYP13A1 (519 aa).

Cys-465 is a binding site for heme.

The protein belongs to the cytochrome P450 family. It depends on heme as a cofactor.

Cytochromes P450 are a group of heme-thiolate monooxygenases. They oxidize a variety of structurally unrelated compounds, including steroids, fatty acids, and xenobiotics. This is Putative cytochrome P450 CYP13A1 (cyp-13A1) from Caenorhabditis elegans.